A 312-amino-acid chain; its full sequence is Ribosomal protein L11 methyltransferase (312 aa).

4 residues coordinate S-adenosyl-L-methionine: Thr163, Gly184, Asp206, and Asn248.

Belongs to the methyltransferase superfamily. PrmA family.

The protein resides in the cytoplasm. It catalyses the reaction L-lysyl-[protein] + 3 S-adenosyl-L-methionine = N(6),N(6),N(6)-trimethyl-L-lysyl-[protein] + 3 S-adenosyl-L-homocysteine + 3 H(+). Functionally, methylates ribosomal protein L11. This Clostridium kluyveri (strain NBRC 12016) protein is Ribosomal protein L11 methyltransferase.